The sequence spans 188 residues: Movement protein (188 aa).

Belongs to the tombusvirus/aureusvirus movement protein p22 family. Interacts with host protein HFI22. Post-translationally, phosphorylated.

It is found in the host membrane. Functionally, transports viral genome to neighboring plant cells directly through plasmosdesmata, without any budding. The movement protein allows efficient cell to cell propagation, by bypassing the host cell wall barrier. The protein is Movement protein of Capsicum annuum (Capsicum pepper).